A 616-amino-acid polypeptide reads, in one-letter code: Dihydroxy-acid dehydratase (616 aa).

Asp81 is a binding site for Mg(2+). Cys122 provides a ligand contact to [2Fe-2S] cluster. Residues Asp123 and Lys124 each contribute to the Mg(2+) site. Lys124 bears the N6-carboxylysine mark. Residue Cys195 participates in [2Fe-2S] cluster binding. A Mg(2+)-binding site is contributed by Glu491. Residue Ser517 is the Proton acceptor of the active site.

It belongs to the IlvD/Edd family. Homodimer. Requires [2Fe-2S] cluster as cofactor. It depends on Mg(2+) as a cofactor.

It carries out the reaction (2R)-2,3-dihydroxy-3-methylbutanoate = 3-methyl-2-oxobutanoate + H2O. The catalysed reaction is (2R,3R)-2,3-dihydroxy-3-methylpentanoate = (S)-3-methyl-2-oxopentanoate + H2O. Its pathway is amino-acid biosynthesis; L-isoleucine biosynthesis; L-isoleucine from 2-oxobutanoate: step 3/4. It functions in the pathway amino-acid biosynthesis; L-valine biosynthesis; L-valine from pyruvate: step 3/4. In terms of biological role, functions in the biosynthesis of branched-chain amino acids. Catalyzes the dehydration of (2R,3R)-2,3-dihydroxy-3-methylpentanoate (2,3-dihydroxy-3-methylvalerate) into 2-oxo-3-methylpentanoate (2-oxo-3-methylvalerate) and of (2R)-2,3-dihydroxy-3-methylbutanoate (2,3-dihydroxyisovalerate) into 2-oxo-3-methylbutanoate (2-oxoisovalerate), the penultimate precursor to L-isoleucine and L-valine, respectively. The chain is Dihydroxy-acid dehydratase from Klebsiella pneumoniae (strain 342).